We begin with the raw amino-acid sequence, 337 residues long: MSIPSLDYRLFSHGDPAQRQQFCEDLVKTFAGYGFAKLRNHGLSDERVDEAFSYSNKFFNLPLHIKQKAKHPEAPNPHRGYSGVGQEKISAITGFEKGERSEVRAAELRESWDQGPADDELYANRWMPDEDLPGYRSFMESFFVECQTLHQSLLQCIATGLSLPSDELSSRCAKCSAELRLNHYPATPASSLASGACRISPHSDFGTITLLFQDSVGGLQVEDQQNPGVFLPVEPDDVHEMIINVGDCLSRWTDGRLRSVNHRVVSPTRLPGDADVMIPERHSLAYFGKPSRDEVVDSLPLFVPEGCKPKFADRWTALEYNQSKLMRTYNVETAAQG.

One can recognise a Fe2OG dioxygenase domain in the interval 175 to 290 (CSAELRLNHY…RHSLAYFGKP (116 aa)). Fe cation-binding residues include His-202, Asp-204, and His-262. Arg-281 is a 2-oxoglutarate binding site.

This sequence belongs to the iron/ascorbate-dependent oxidoreductase family. Requires Fe(2+) as cofactor.

The protein operates within antifungal biosynthesis. In terms of biological role, 2-oxoglutarate-dependent dioxygenase; part of the gene cluster that mediates the biosynthesis of the antifungal antibiotic FR901469, an inhibitor of beta-1,3-glucansynthase, exerting antifungal activity against the pathogenes Candida albicans and Aspergillus fumigatus. FR901469 is a cyclic depsipeptide containing 12 amino acid residues and a fatty acid chain. The NRPS frbI contains 12 modules responsible for the formation of the depsipeptide backbone which is denoted as Acyl-Thr-Ala-Tyr-Val-4OHPro-Thr-Thr-3OHPro-threo3OHGln-Gly-Thr-Orn-OH (C71H116N14O23). The PKS frbB is probably involved in the production of the hydrocarbon chain, and the acyl-CoA ligase frbC might be involved in the transport of the chain to the peptide ptoduct of frbI. Because FR901469 contains 3 hydroxylated amino acid residues, the 3 oxygenases frbA, frbH, and frbJ might be participating in amino acid hydroxylation. As no thioesterase domains were detected in frbI or frbB, the thioesterases frbD and frbE may instead release and cyclize the products of the NRPS and PKS, respectively. The protein is 2-oxoglutarate-dependent dioxygenase frbA of Dothideomycetidae sp. (strain 11243) (Fungal sp. (strain No.11243)).